A 274-amino-acid chain; its full sequence is Trypsin-1 (274 aa).

Positions 1–18 are cleaved as a signal peptide; it reads MSNKIAILLAVLVAVVAC. Positions 19 to 47 are cleaved as a propeptide — activation peptide; that stretch reads AEAQANQRHRLVRPSPSFSPRPRYAVGQR. Residues 48–273 form the Peptidase S1 domain; the sequence is IVGGFEIDVS…VRDWVRENSG (226 aa). A disulfide bridge connects residues Cys73 and Cys89. Catalysis depends on charge relay system residues His88 and Asp133. 2 disulfide bridges follow: Cys198–Cys214 and Cys225–Cys249. Catalysis depends on Ser229, which acts as the Charge relay system.

It belongs to the peptidase S1 family. In terms of tissue distribution, constitutively expressed at low level in the gut of adult females. Also expressed in the gut of male and female pupae.

It is found in the secreted. It catalyses the reaction Preferential cleavage: Arg-|-Xaa, Lys-|-Xaa.. In terms of biological role, major function may be to aid in digestion of the blood meal. This Anopheles gambiae (African malaria mosquito) protein is Trypsin-1 (TRYP1).